Reading from the N-terminus, the 686-residue chain is Glycine--tRNA ligase beta subunit (686 aa).

Belongs to the class-II aminoacyl-tRNA synthetase family. As to quaternary structure, tetramer of two alpha and two beta subunits.

The protein resides in the cytoplasm. The catalysed reaction is tRNA(Gly) + glycine + ATP = glycyl-tRNA(Gly) + AMP + diphosphate. The chain is Glycine--tRNA ligase beta subunit from Geobacter metallireducens (strain ATCC 53774 / DSM 7210 / GS-15).